A 747-amino-acid chain; its full sequence is DNA damage checkpoint protein LCD1 (747 aa).

3 positions are modified to phosphoserine: serine 10, serine 11, and serine 76. A coiled-coil region spans residues asparagine 62–glutamate 139. The segment at lysine 145–lysine 180 is disordered. Over residues proline 146–proline 160 the composition is skewed to low complexity.

In terms of assembly, forms a complex with MEC1. Post-translationally, phosphorylated by MEC1 in a cell cycle dependent manner and in response to DNA damage.

Its subcellular location is the cytoplasm. The protein localises to the nucleus. Functionally, forms a complex with the serine/threonine kinase MEC1 which activates checkpoint signaling upon genotoxic stresses. The MEC1-LCD1 complex is recruited by the single-strand-binding protein complex RPA to DNA lesions in order to initiate the DNA repair by homologous recombination, after the MRX-complex and TEL1 are displaced. Required for the recruitment of MEC1 to DNA lesions, the activation of CHK1 and RAD53 kinases and phosphorylation of RAD9 in response to DNA damage. Required for cell growth and meiotic recombination. This is DNA damage checkpoint protein LCD1 (LCD1) from Saccharomyces cerevisiae (strain ATCC 204508 / S288c) (Baker's yeast).